We begin with the raw amino-acid sequence, 392 residues long: Selenide, water dikinase 1 (392 aa).

The active site involves Cys31. Residues Lys32, 67 to 69, Asp87, Asp110, and 161 to 164 contribute to the ATP site; these read GMD and GGQT. Asp69 serves as a coordination point for Mg(2+). Asp110 is a Mg(2+) binding site. Asp265 lines the Mg(2+) pocket.

It belongs to the selenophosphate synthase 1 family. Class II subfamily. As to quaternary structure, homodimer. It depends on Mg(2+) as a cofactor.

Its subcellular location is the cell membrane. The protein localises to the nucleus membrane. The enzyme catalyses hydrogenselenide + ATP + H2O = selenophosphate + AMP + phosphate + 2 H(+). Its function is as follows. Synthesizes selenophosphate from selenide and ATP. This is Selenide, water dikinase 1 (sephs1) from Xenopus laevis (African clawed frog).